Here is a 163-residue protein sequence, read N- to C-terminus: Small ribosomal subunit protein uS5 (163 aa).

The 64-residue stretch at 11-74 folds into the S5 DRBM domain; it reads LTDRVVHINR…EQAKKNLIRV (64 aa).

This sequence belongs to the universal ribosomal protein uS5 family. Part of the 30S ribosomal subunit. Contacts proteins S4 and S8.

Functionally, with S4 and S12 plays an important role in translational accuracy. Its function is as follows. Located at the back of the 30S subunit body where it stabilizes the conformation of the head with respect to the body. This chain is Small ribosomal subunit protein uS5, found in Syntrophotalea carbinolica (strain DSM 2380 / NBRC 103641 / GraBd1) (Pelobacter carbinolicus).